Here is a 1715-residue protein sequence, read N- to C-terminus: Pentafunctional AROM polypeptide (1715 aa).

Residues 1–17 (MTSTASAQQPVLRTKTP) are compositionally biased toward polar residues. Positions 1-26 (MTSTASAQQPVLRTKTPSYHAPPSTD) are disordered. Residues 1–421 (MTSTASAQQP…VQNMASTVSD (421 aa)) form a 3-dehydroquinate synthase region. Residues 71 to 73 (DQN), 112 to 115 (EASK), 143 to 145 (GGV), and Asp-148 each bind NAD(+). A 7-phospho-2-dehydro-3-deoxy-D-arabino-heptonate-binding site is contributed by Arg-159. Position 168-169 (168-169 (TT)) interacts with NAD(+). Asp-175 and Lys-181 together coordinate 7-phospho-2-dehydro-3-deoxy-D-arabino-heptonate. Residue Lys-190 coordinates NAD(+). Asn-191 is a binding site for 7-phospho-2-dehydro-3-deoxy-D-arabino-heptonate. Residues 208–211 (WLKT) and Asn-219 contribute to the NAD(+) site. Zn(2+) is bound at residue Glu-223. Residues 223 to 226 (EVVK) and Lys-287 contribute to the 7-phospho-2-dehydro-3-deoxy-D-arabino-heptonate site. Glu-297 (proton acceptor; for 3-dehydroquinate synthase activity) is an active-site residue. 7-phospho-2-dehydro-3-deoxy-D-arabino-heptonate contacts are provided by residues 301–305 (RNLVN) and His-308. Residue His-308 coordinates Zn(2+). The active-site Proton acceptor; for 3-dehydroquinate synthase activity is His-312. Residues His-324 and Lys-393 each contribute to the 7-phospho-2-dehydro-3-deoxy-D-arabino-heptonate site. Zn(2+) is bound at residue His-324. An EPSP synthase region spans residues 434–895 (VTPIHEQPNK…WDDLERKLGI (462 aa)). Cys-877 serves as the catalytic For EPSP synthase activity. Positions 948-1165 (HATIICIGMR…KGGRRTYFLS (218 aa)) are shikimate kinase. 955–962 (GMRASGKT) provides a ligand contact to ATP. A 3-dehydroquinase region spans residues 1166–1389 (LTFPDVVPKL…AAPGQLSFRQ (224 aa)). His-1292 serves as the catalytic Proton acceptor; for 3-dehydroquinate dehydratase activity. Lys-1320 (schiff-base intermediate with substrate; for 3-dehydroquinate dehydratase activity) is an active-site residue. A shikimate dehydrogenase region spans residues 1402-1715 (ARRFALFGSP…AAWDVYLQRC (314 aa)).

The protein in the N-terminal section; belongs to the sugar phosphate cyclases superfamily. Dehydroquinate synthase family. In the 2nd section; belongs to the EPSP synthase family. It in the 3rd section; belongs to the shikimate kinase family. This sequence in the 4th section; belongs to the type-I 3-dehydroquinase family. The protein in the C-terminal section; belongs to the shikimate dehydrogenase family. Homodimer. The cofactor is Zn(2+).

It localises to the cytoplasm. It catalyses the reaction 7-phospho-2-dehydro-3-deoxy-D-arabino-heptonate = 3-dehydroquinate + phosphate. It carries out the reaction 3-dehydroquinate = 3-dehydroshikimate + H2O. The catalysed reaction is shikimate + NADP(+) = 3-dehydroshikimate + NADPH + H(+). The enzyme catalyses shikimate + ATP = 3-phosphoshikimate + ADP + H(+). It catalyses the reaction 3-phosphoshikimate + phosphoenolpyruvate = 5-O-(1-carboxyvinyl)-3-phosphoshikimate + phosphate. The protein operates within metabolic intermediate biosynthesis; chorismate biosynthesis; chorismate from D-erythrose 4-phosphate and phosphoenolpyruvate: step 2/7. It participates in metabolic intermediate biosynthesis; chorismate biosynthesis; chorismate from D-erythrose 4-phosphate and phosphoenolpyruvate: step 3/7. Its pathway is metabolic intermediate biosynthesis; chorismate biosynthesis; chorismate from D-erythrose 4-phosphate and phosphoenolpyruvate: step 4/7. It functions in the pathway metabolic intermediate biosynthesis; chorismate biosynthesis; chorismate from D-erythrose 4-phosphate and phosphoenolpyruvate: step 5/7. The protein operates within metabolic intermediate biosynthesis; chorismate biosynthesis; chorismate from D-erythrose 4-phosphate and phosphoenolpyruvate: step 6/7. Its function is as follows. The AROM polypeptide catalyzes 5 consecutive enzymatic reactions in prechorismate polyaromatic amino acid biosynthesis. The protein is Pentafunctional AROM polypeptide of Mycosarcoma maydis (Corn smut fungus).